Reading from the N-terminus, the 1642-residue chain is Coiled-coil domain-containing protein 7A (1642 aa).

Residues 21–51 form a disordered region; sequence PYKKGLLNSSPKPKEKHNAKSKYGKNESMVL. The stretch at 161–184 is one LRR 1 repeat; the sequence is VNQMEEISKDQSNLEELQSDGKTA. Residues 279 to 330 are a coiled coil; sequence LEKALNDQQTIESKYKQLETDFQMLIMEKTLLEAEIRRLREIERVKSAAKEE. Residues 1310–1333 form an LRR 2 repeat; that stretch reads IKELSKTLNLDGGDIELSDFVFKT.

In terms of tissue distribution, exclusively expressed in the testes.

The chain is Coiled-coil domain-containing protein 7A from Mus musculus (Mouse).